Here is a 222-residue protein sequence, read N- to C-terminus: MNRSLYRTRIKFCGMTRAGDIRLAGELGVDAVGFIFAHGSPRRVAPAEARAMRQATAPMVDVVALFRNNSKEEVREVVRTVRPTLLQFHGEEDDAFCRSFNLPYLKAVPMGASGVNGEDANARTLQLAYPNTAGFLFDSHAPGEGGGTGKTFDWSRLPTGLHRPFLLAGGITADNVFDAIVATLPWGVDVSSGVELAPGIKDGHKMRKFVEEVRRADCHEMS.

This sequence belongs to the TrpF family.

The catalysed reaction is N-(5-phospho-beta-D-ribosyl)anthranilate = 1-(2-carboxyphenylamino)-1-deoxy-D-ribulose 5-phosphate. The protein operates within amino-acid biosynthesis; L-tryptophan biosynthesis; L-tryptophan from chorismate: step 3/5. The chain is N-(5'-phosphoribosyl)anthranilate isomerase from Xanthomonas campestris pv. campestris (strain 8004).